A 274-amino-acid polypeptide reads, in one-letter code: Formamidopyrimidine-DNA glycosylase (274 aa).

Pro2 acts as the Schiff-base intermediate with DNA in catalysis. The active-site Proton donor is the Glu3. Lys58 functions as the Proton donor; for beta-elimination activity in the catalytic mechanism. 3 residues coordinate DNA: His91, Arg110, and Lys152. Residues 237–271 form an FPG-type zinc finger; that stretch reads KVYGRKNLPCLVCENKIETVVIAGRHSAFCPHCQP. Arg261 (proton donor; for delta-elimination activity) is an active-site residue.

Belongs to the FPG family. As to quaternary structure, monomer. Zn(2+) is required as a cofactor.

The enzyme catalyses Hydrolysis of DNA containing ring-opened 7-methylguanine residues, releasing 2,6-diamino-4-hydroxy-5-(N-methyl)formamidopyrimidine.. It catalyses the reaction 2'-deoxyribonucleotide-(2'-deoxyribose 5'-phosphate)-2'-deoxyribonucleotide-DNA = a 3'-end 2'-deoxyribonucleotide-(2,3-dehydro-2,3-deoxyribose 5'-phosphate)-DNA + a 5'-end 5'-phospho-2'-deoxyribonucleoside-DNA + H(+). Its function is as follows. Involved in base excision repair of DNA damaged by oxidation or by mutagenic agents. Acts as a DNA glycosylase that recognizes and removes damaged bases. Has a preference for oxidized purines, such as 7,8-dihydro-8-oxoguanine (8-oxoG). Has AP (apurinic/apyrimidinic) lyase activity and introduces nicks in the DNA strand. Cleaves the DNA backbone by beta-delta elimination to generate a single-strand break at the site of the removed base with both 3'- and 5'-phosphates. This Legionella pneumophila (strain Lens) protein is Formamidopyrimidine-DNA glycosylase.